A 282-amino-acid chain; its full sequence is Pantothenate synthetase (282 aa).

30–37 (MGYLHEGH) is a binding site for ATP. H37 serves as the catalytic Proton donor. Residue Q61 participates in (R)-pantoate binding. Q61 lines the beta-alanine pocket. An ATP-binding site is contributed by 147 to 150 (GEKD). Q153 contributes to the (R)-pantoate binding site. Residues I176 and 184 to 187 (KSSR) each bind ATP.

Belongs to the pantothenate synthetase family. Homodimer.

It is found in the cytoplasm. It catalyses the reaction (R)-pantoate + beta-alanine + ATP = (R)-pantothenate + AMP + diphosphate + H(+). Its pathway is cofactor biosynthesis; (R)-pantothenate biosynthesis; (R)-pantothenate from (R)-pantoate and beta-alanine: step 1/1. Functionally, catalyzes the condensation of pantoate with beta-alanine in an ATP-dependent reaction via a pantoyl-adenylate intermediate. The protein is Pantothenate synthetase of Enterococcus faecalis (strain ATCC 700802 / V583).